The primary structure comprises 205 residues: MYGYGYTPAVVAPTVMSFSFVPPQAFQQCWFYSLYTQIQQAQLYEMQSWFMRVDANRSGTISSGELQYLNIGGTPLGIETATKLIKVFDHNKNGQIDFYEYAALHQFINNLYRCFVANDRNFSGTIDANEIYNALITSGFQLPFPTVNYLFLKLSPSGYGLLFTQFLNLCATVALTRSLFEWNDPMRTGVVHLNLAQLYDIIALV.

EF-hand domains follow at residues E45–P75, L76–L111, and D119–Q141. 10 residues coordinate Ca(2+): D54, N56, S58, T60, E65, D89, N91, N93, Q95, and E100.

It belongs to the Peflin/Sorcin family. As to quaternary structure, in contrast to pefA, does not form homodimers in presence of Ca(2+). May form heterodimers with pefA.

It localises to the cytoplasm. The protein resides in the membrane. The protein is Penta-EF hand domain-containing protein 2 (pefB) of Dictyostelium discoideum (Social amoeba).